Reading from the N-terminus, the 281-residue chain is Sulfur carrier protein FdhD (281 aa).

The active-site Cysteine persulfide intermediate is cysteine 117.

Belongs to the FdhD family.

It localises to the cytoplasm. Functionally, required for formate dehydrogenase (FDH) activity. Acts as a sulfur carrier protein that transfers sulfur from IscS to the molybdenum cofactor prior to its insertion into FDH. In Xanthomonas campestris pv. campestris (strain 8004), this protein is Sulfur carrier protein FdhD.